The sequence spans 619 residues: Chaperone protein HscA homolog (619 aa).

It belongs to the heat shock protein 70 family.

In terms of biological role, chaperone involved in the maturation of iron-sulfur cluster-containing proteins. Has a low intrinsic ATPase activity which is markedly stimulated by HscB. This is Chaperone protein HscA homolog from Shewanella denitrificans (strain OS217 / ATCC BAA-1090 / DSM 15013).